The following is a 254-amino-acid chain: RNA polymerase sigma-D factor (254 aa).

The Polymerase core binding motif lies at 54–67 (DLMSLGMLGLYDAL). Positions 220-239 (LTEIGQVLNLSTSRISQIHS) form a DNA-binding region, H-T-H motif.

As to quaternary structure, monomer. Interacts transiently with the RNAP core.

Functionally, sigma factors are initiation factors that promote the attachment of RNA polymerase (RNAP) to specific initiation sites and are then released. This alternative sigma factor is required for the transcription of the flagellin and motility genes as well as for wild-type chemotaxis. Associates with the RNAP core during all growth phases with a peak at the transition to stationary phase. The protein is RNA polymerase sigma-D factor (sigD) of Bacillus subtilis (strain 168).